We begin with the raw amino-acid sequence, 445 residues long: O-fucosyltransferase 23 (445 aa).

Residues 12–34 (IFSKSVACKCLVLVGIALFYRAL) traverse the membrane as a helical; Signal-anchor for type II membrane protein segment. N-linked (GlcNAc...) asparagine glycosylation is found at asparagine 97 and asparagine 179. Position 258–260 (258–260 (HMR)) interacts with substrate. A glycan (N-linked (GlcNAc...) asparagine) is linked at asparagine 294. A substrate-binding site is contributed by 374–375 (TF). Residue asparagine 424 is glycosylated (N-linked (GlcNAc...) asparagine).

Belongs to the glycosyltransferase GT106 family. In terms of tissue distribution, expressed in dry pollen grains and germinating pollen grains.

It localises to the golgi apparatus membrane. Its pathway is glycan metabolism. Probable protein O-fucosyltransferase required for correct pollen tube penetration through the stigma-style interface. May be involved in protein O-glycosylation events during pollen-pistil interactions. The chain is O-fucosyltransferase 23 from Arabidopsis thaliana (Mouse-ear cress).